Here is a 232-residue protein sequence, read N- to C-terminus: Ribonuclease 3 (232 aa).

Residues 6–133 enclose the RNase III domain; that stretch reads LKEIEENLGV…IIAAVYLDKG (128 aa). Glutamate 46 is a Mg(2+) binding site. The active site involves aspartate 50. Residues aspartate 119 and glutamate 122 each contribute to the Mg(2+) site. Residue glutamate 122 is part of the active site. The DRBM domain maps to 160-229; the sequence is DFKTKLQELL…AKQALDILEG (70 aa).

Belongs to the ribonuclease III family. In terms of assembly, homodimer. Mg(2+) is required as a cofactor.

Its subcellular location is the cytoplasm. It catalyses the reaction Endonucleolytic cleavage to 5'-phosphomonoester.. Functionally, digests double-stranded RNA. Involved in the processing of primary rRNA transcript to yield the immediate precursors to the large and small rRNAs (23S and 16S). Processes some mRNAs, and tRNAs when they are encoded in the rRNA operon. Processes pre-crRNA and tracrRNA of type II CRISPR loci if present in the organism. The chain is Ribonuclease 3 from Clostridium beijerinckii (strain ATCC 51743 / NCIMB 8052) (Clostridium acetobutylicum).